The sequence spans 920 residues: Periplasmic nitrate reductase (920 aa).

The tat-type signal signal peptide spans 1 to 29 (MNRRDFIKSTAAAAACASAGIALPANLNA). Residues 35–91 (WRWDKAVCRFCGTGCGIMVATKNGKIVAVKGDPEAPVNRGLNCIKGYFNAKIMYGDD) form the 4Fe-4S Mo/W bis-MGD-type domain. [4Fe-4S] cluster-binding residues include Cys-42, Cys-45, Cys-49, and Cys-77. Residues Lys-79, Gln-147, Asn-172, Cys-176, 209–216 (WGANMAEM), Met-416, Gln-420, Asn-526, 551–552 (SD), Lys-574, Asp-601, and 810–819 (TGRVLEHWHS) each bind Mo-bis(molybdopterin guanine dinucleotide). Position 886 (Trp-886) interacts with substrate. Residues Asn-894 and Lys-911 each contribute to the Mo-bis(molybdopterin guanine dinucleotide) site.

It belongs to the prokaryotic molybdopterin-containing oxidoreductase family. NasA/NapA/NarB subfamily. In terms of assembly, component of the periplasmic nitrate reductase NapAB complex composed of NapA and NapB. Requires [4Fe-4S] cluster as cofactor. Mo-bis(molybdopterin guanine dinucleotide) serves as cofactor. In terms of processing, predicted to be exported by the Tat system. The position of the signal peptide cleavage has not been experimentally proven.

It is found in the periplasm. The enzyme catalyses 2 Fe(II)-[cytochrome] + nitrate + 2 H(+) = 2 Fe(III)-[cytochrome] + nitrite + H2O. Functionally, catalytic subunit of the periplasmic nitrate reductase complex NapAB. Receives electrons from NapB and catalyzes the reduction of nitrate to nitrite. The chain is Periplasmic nitrate reductase from Campylobacter hominis (strain ATCC BAA-381 / DSM 21671 / CCUG 45161 / LMG 19568 / NCTC 13146 / CH001A).